Here is a 140-residue protein sequence, read N- to C-terminus: Large ribosomal subunit protein uL14 (140 aa).

Ser-17 is subject to Phosphoserine. A Phosphotyrosine modification is found at Tyr-38.

This sequence belongs to the universal ribosomal protein uL14 family. In terms of assembly, component of the large ribosomal subunit.

Its subcellular location is the cytoplasm. Functionally, component of the large ribosomal subunit. The ribosome is a large ribonucleoprotein complex responsible for the synthesis of proteins in the cell. The polypeptide is Large ribosomal subunit protein uL14 (RPL23) (Canis lupus familiaris (Dog)).